The chain runs to 492 residues: 3-octaprenyl-4-hydroxybenzoate carboxy-lyase (492 aa).

Position 175 (asparagine 175) interacts with Mn(2+). Prenylated FMN-binding positions include 178 to 180 (IYR), 192 to 194 (RWL), and 197 to 198 (RG). Mn(2+) is bound at residue glutamate 241. The active-site Proton donor is the aspartate 290.

The protein belongs to the UbiD family. In terms of assembly, homohexamer. Prenylated FMN serves as cofactor. It depends on Mn(2+) as a cofactor.

The protein resides in the cell membrane. It carries out the reaction a 4-hydroxy-3-(all-trans-polyprenyl)benzoate + H(+) = a 2-(all-trans-polyprenyl)phenol + CO2. The protein operates within cofactor biosynthesis; ubiquinone biosynthesis. Functionally, catalyzes the decarboxylation of 3-octaprenyl-4-hydroxy benzoate to 2-octaprenylphenol, an intermediate step in ubiquinone biosynthesis. The chain is 3-octaprenyl-4-hydroxybenzoate carboxy-lyase from Salmonella paratyphi A (strain ATCC 9150 / SARB42).